Reading from the N-terminus, the 49-residue chain is Agglutinin-1 (49 aa).

In terms of assembly, homooligomer. Glycosylated.

Its function is as follows. Beta-galactoside specific lectin. Has a hemagglutinating activity on erythrocytes. The chain is Agglutinin-1 from Pomacea flagellata (Apple snail).